A 141-amino-acid chain; its full sequence is Subtilase cytotoxin subunit B (141 aa).

Residues 1-23 form the signal peptide; that stretch reads MTIKRFFVCAGIMGCLSLNPAMA. N-glycoloyl-alpha-neuraminate is bound by residues 33 to 35 and Gln59; that span reads MFS. The segment at 89–94 is hydrophobic patch important for binding to SubA; sequence YFYTTG. Residue Tyr101 participates in N-glycoloyl-alpha-neuraminate binding.

As to quaternary structure, forms a complex with SubA with the stoichiometry SubA1:SubB5 (called SubAB5). Each SubB subunit makes different contacts with the single SubA subunit. This subunit alone forms pentamers.

The protein resides in the secreted. The protein localises to the host cytoplasm. Its subcellular location is the host cytosol. It localises to the host endoplasmic reticulum lumen. In terms of biological role, receptor-binding subunit of subtilase cytotoxin SubAB5. Required for receptor-binding and thus correct trafficking in the host cell. Has specificity for host glycans terminating in the sialic acid N-glycolyl-alpha-neuraminic acid (Neu5Gc); each subunit in the SubB pentamer binds one Neu5Gc. The protease subunit (SubA) cleaves host BiP/HSPA5, inducing the host endoplasmic reticulum stress response and eventual cell death. Culture supernatant of E.coli expressing both subA and subB are toxic for Vero cells (African green monkey kidney cell line), Chinese hamster ovary cells and Hct-8 cells (human colonic epithelial cell line); the subunits are not toxic individually. Purified SubAB5 is highly toxic, &lt;0.1 pg is able to kill at least 50% of 30'000 Vero cells in a microtiter plate assay after 3 days; no cytotoxicity is seen at 24 hours. Preabsorption with cells expressing a ganglioside GM2 mimic reduced cytotoxicity of SubAB5 by 93% in the Vero cytotoxicity assay. Intraperitoneal injection of 200 ng of purified SubAB5 kills mice; the higher the dose the faster the mice die. Animals injected with purified SubAB5 have microvascular thrombi in the brain and other organs, including the renal tubules and glomeruli. Mice fed E.coli cells expressing cloned SubAB5 experience drastic weight loss and appear ill and lethargic. SubB alone at 2.5 ug/ml causes vacuolation of Vero cells, which requires the V-type ATPase proton pump; treated cells die. Protein synthesis in Vero cells is transiently inhibited by SubAB5; both subunits are required for this effect. Inhibition of protein synthesis is prevented by brefeldin A; cells are arrested in the G1 phase. SubAB5 at 100 ng/ml induced caspase-dependent apoptosis in Vero cells through mitochondrial membrane damage. In Escherichia coli, this protein is Subtilase cytotoxin subunit B.